The following is a 277-amino-acid chain: MAAELEYESVLCVKPDVSVYRIPPRASNRGYRASDWKLDQPDWTGRLRITSKGKIAYIKLEDKVSGELFAQAPVEQYPGIAVETVADSSRYFVIRIQDGTGRSAFIGIGFTDRGDAFDFNVSLQDHFKWVKQETEISKESQEMDSRPKLDLGFKEGQTIKLSIGNITAKKGGTSKPRASGTGGLSLLPPPPGGKVTIPPPSSSVAISNHVTPPPIPKSNHGSNDSDILLDLDSPAPVPTSAPAPAPASTSNDLWGDFSTASSSVPNQAPQPSNWVQF.

Residues 164 to 277 (GNITAKKGGT…APQPSNWVQF (114 aa)) are disordered. Residues 187 to 201 (LPPPPGGKVTIPPPS) are compositionally biased toward pro residues. Residue Thr211 is modified to Phosphothreonine. Residues 222-234 (SNDSDILLDLDSP) are compositionally biased toward low complexity. The span at 235–245 (APVPTSAPAPA) shows a compositional bias: pro residues. 2 short sequence motifs (WXXF motif) span residues 254 to 257 (WGDF) and 274 to 277 (WVQF). The segment covering 258 to 277 (STASSSVPNQAPQPSNWVQF) has biased composition (polar residues).

Belongs to the NECAP family. Interacts with AP1G1 and AP2A1 components of the adapter protein complexes AP-1 and AP-2. Interacts with the GAE domain proteins GGA1, GGA2 and GGA3. Interacts with AP2A2. As to expression, expressed predominantly in brain (at protein level).

It localises to the cytoplasmic vesicle. Its subcellular location is the clathrin-coated vesicle membrane. It is found in the cell membrane. Involved in endocytosis. The polypeptide is Adaptin ear-binding coat-associated protein 1 (Necap1) (Rattus norvegicus (Rat)).